Reading from the N-terminus, the 728-residue chain is Glycine--tRNA ligase (728 aa).

The N-terminal 32 residues, Met1–Leu32, are a transit peptide targeting the mitochondrion. Residues Leu52–Val108 form the WHEP-TRS domain. Lys193 carries the N6-acetyllysine modification. Glu288 serves as a coordination point for glycine. Residues Arg320–Glu322 and Arg331–Val332 contribute to the ATP site. Glu339 contributes to the glycine binding site. A Phosphotyrosine modification is found at Tyr442. Glu446 to Ile447 is an ATP binding site. Residue Lys490 is modified to N6-acetyllysine. Glycine is bound at residue Glu565–Ser567. Arg572 provides a ligand contact to ATP. At Ser689 the chain carries Phosphoserine. Thr725 is modified (phosphothreonine).

Belongs to the class-II aminoacyl-tRNA synthetase family. Homodimer.

Its subcellular location is the cytoplasm. It localises to the mitochondrion. The protein resides in the cell projection. It is found in the axon. The protein localises to the secreted. Its subcellular location is the extracellular exosome. The catalysed reaction is tRNA(Gly) + glycine + ATP = glycyl-tRNA(Gly) + AMP + diphosphate. It catalyses the reaction 2 ATP + H(+) = P(1),P(4)-bis(5'-adenosyl) tetraphosphate + diphosphate. Functionally, catalyzes the ATP-dependent ligation of glycine to the 3'-end of its cognate tRNA, via the formation of an aminoacyl-adenylate intermediate (Gly-AMP). Also produces diadenosine tetraphosphate (Ap4A), a universal pleiotropic signaling molecule needed for cell regulation pathways, by direct condensation of 2 ATPs. Thereby, may play a special role in Ap4A homeostasis. The sequence is that of Glycine--tRNA ligase (Gars1) from Rattus norvegicus (Rat).